An 843-amino-acid polypeptide reads, in one-letter code: Tetratricopeptide repeat protein 7B (843 aa).

The TPR 1 repeat unit spans residues 97–131 (QESNLVMAKLTYVEGDYKEALNIYARVGLDDLPLT). A phosphoserine mark is found at serine 160 and serine 202. TPR repeat units follow at residues 219–252 (ETGL…VETR), 363–396 (SVVY…AFEE), 397–430 (FHLW…KPDD), 479–514 (TYSL…SPTD), 516–548 (QAAF…QGDD), and 549–582 (ANSL…YPEN). Residues serine 625, serine 629, serine 630, serine 673, serine 677, serine 678, and serine 681 each carry the phosphoserine modification. 4 TPR repeats span residues 696–729 (AQIW…FPMS), 730–763 (HNVL…SPTH), 765–797 (KSMQ…NSTA), and 798–831 (HEVW…EASS).

In terms of assembly, component of a phosphatidylinositol 4-kinase (PI4K) complex, composed of PI4KA, EFR3 (EFR3A or EFR3B), TTC7 (TTC7A or TTC7B) and HYCC (HYCC1 or HYCC2). Interacts with PI4KA, interaction is direct. Interacts with EFR3 (EFR3A or EFR3B), interaction is direct. Interacts with HYCC (HYCC1 or HYCC2), interaction is direct. Association with the PI4K complex is strongly reduced by TMEM150A.

It is found in the cytoplasm. The protein resides in the cytosol. It localises to the cell membrane. Functionally, component of a complex required to localize phosphatidylinositol 4-kinase (PI4K) to the plasma membrane. The complex acts as a regulator of phosphatidylinositol 4-phosphate (PtdIns(4)P) synthesis. In the complex, plays a central role in bridging PI4KA to EFR3B and HYCC1, via direct interactions. The sequence is that of Tetratricopeptide repeat protein 7B from Mus musculus (Mouse).